A 560-amino-acid chain; its full sequence is Putative ABC transporter ATP-binding protein SP_0483 (560 aa).

ABC transporter domains follow at residues 6 to 247 (IEWK…GIRE) and 297 to 528 (FRLE…ANLK). Residues 40–47 (GPSGSGKS) and 329–336 (GKNGAGKS) each bind ATP.

The protein belongs to the ABC transporter superfamily.

The protein localises to the cell membrane. Functionally, probably part of an ABC transporter complex. Responsible for energy coupling to the transport system. The sequence is that of Putative ABC transporter ATP-binding protein SP_0483 from Streptococcus pneumoniae serotype 4 (strain ATCC BAA-334 / TIGR4).